The following is a 393-amino-acid chain: 1-deoxy-D-xylulose 5-phosphate reductoisomerase (393 aa).

Residues T16, G17, S18, I19, A42, R43, N44, and N127 each contribute to the NADPH site. K128 lines the 1-deoxy-D-xylulose 5-phosphate pocket. NADPH is bound at residue E129. Position 153 (D153) interacts with Mn(2+). 4 residues coordinate 1-deoxy-D-xylulose 5-phosphate: S154, E155, S179, and H202. A Mn(2+)-binding site is contributed by E155. Residue G208 coordinates NADPH. Residues S215, N220, K221, and E224 each coordinate 1-deoxy-D-xylulose 5-phosphate. Residue E224 coordinates Mn(2+).

Belongs to the DXR family. Mg(2+) serves as cofactor. Requires Mn(2+) as cofactor.

The enzyme catalyses 2-C-methyl-D-erythritol 4-phosphate + NADP(+) = 1-deoxy-D-xylulose 5-phosphate + NADPH + H(+). Its pathway is isoprenoid biosynthesis; isopentenyl diphosphate biosynthesis via DXP pathway; isopentenyl diphosphate from 1-deoxy-D-xylulose 5-phosphate: step 1/6. Its function is as follows. Catalyzes the NADPH-dependent rearrangement and reduction of 1-deoxy-D-xylulose-5-phosphate (DXP) to 2-C-methyl-D-erythritol 4-phosphate (MEP). This chain is 1-deoxy-D-xylulose 5-phosphate reductoisomerase, found in Jannaschia sp. (strain CCS1).